A 156-amino-acid chain; its full sequence is UPF0587 protein (156 aa).

The Zn(2+) site is built by C32, C35, C64, and C67.

The protein belongs to the UPF0587 family.

This is UPF0587 protein from Dictyostelium discoideum (Social amoeba).